The sequence spans 481 residues: F-box/LRR-repeat protein At3g03360 (481 aa).

The disordered stretch occupies residues 1-28 (MEKESQENSTRPDASSTVFSSSKSTCAS). The segment covering 14-28 (ASSTVFSSSKSTCAS) has biased composition (low complexity). One can recognise an F-box domain in the interval 36 to 84 (GDLISRLPDDILQLILSYLPTRLAIKTSVLSRRWRHVWSDTWSLSFHRD). LRR repeat units follow at residues 118–145 (SRPD…SLYL), 196–221 (HCNI…LLFF), 295–320 (EADF…TLGA), 350–375 (ISRY…TIHP), and 413–439 (RRNV…ELIV).

This chain is F-box/LRR-repeat protein At3g03360, found in Arabidopsis thaliana (Mouse-ear cress).